A 445-amino-acid chain; its full sequence is Methylenetetrahydrofolate--tRNA-(uracil-5-)-methyltransferase TrmFO (445 aa).

FAD is bound at residue 9–14 (GGGLAG).

Belongs to the MnmG family. TrmFO subfamily. It depends on FAD as a cofactor.

It is found in the cytoplasm. The enzyme catalyses uridine(54) in tRNA + (6R)-5,10-methylene-5,6,7,8-tetrahydrofolate + NADH + H(+) = 5-methyluridine(54) in tRNA + (6S)-5,6,7,8-tetrahydrofolate + NAD(+). The catalysed reaction is uridine(54) in tRNA + (6R)-5,10-methylene-5,6,7,8-tetrahydrofolate + NADPH + H(+) = 5-methyluridine(54) in tRNA + (6S)-5,6,7,8-tetrahydrofolate + NADP(+). Its function is as follows. Catalyzes the folate-dependent formation of 5-methyl-uridine at position 54 (M-5-U54) in all tRNAs. The chain is Methylenetetrahydrofolate--tRNA-(uracil-5-)-methyltransferase TrmFO from Aquifex aeolicus (strain VF5).